The sequence spans 155 residues: UPF0735 ACT domain-containing protein CA_C1234 (155 aa).

Residues 79–154 (TISILIEHRR…NVLKVEIVAM (76 aa)) form the ACT domain.

Belongs to the UPF0735 family.

The polypeptide is UPF0735 ACT domain-containing protein CA_C1234 (Clostridium acetobutylicum (strain ATCC 824 / DSM 792 / JCM 1419 / IAM 19013 / LMG 5710 / NBRC 13948 / NRRL B-527 / VKM B-1787 / 2291 / W)).